The sequence spans 420 residues: Serine hydroxymethyltransferase (420 aa).

Residues Leu-121 and Gly-125–Leu-127 each bind (6S)-5,6,7,8-tetrahydrofolate. At Lys-230 the chain carries N6-(pyridoxal phosphate)lysine. (6S)-5,6,7,8-tetrahydrofolate contacts are provided by residues Glu-246 and Ser-354 to Phe-356.

This sequence belongs to the SHMT family. In terms of assembly, homodimer. Pyridoxal 5'-phosphate is required as a cofactor.

The protein localises to the cytoplasm. It catalyses the reaction (6R)-5,10-methylene-5,6,7,8-tetrahydrofolate + glycine + H2O = (6S)-5,6,7,8-tetrahydrofolate + L-serine. It functions in the pathway one-carbon metabolism; tetrahydrofolate interconversion. The protein operates within amino-acid biosynthesis; glycine biosynthesis; glycine from L-serine: step 1/1. Catalyzes the reversible interconversion of serine and glycine with tetrahydrofolate (THF) serving as the one-carbon carrier. This reaction serves as the major source of one-carbon groups required for the biosynthesis of purines, thymidylate, methionine, and other important biomolecules. Also exhibits THF-independent aldolase activity toward beta-hydroxyamino acids, producing glycine and aldehydes, via a retro-aldol mechanism. The protein is Serine hydroxymethyltransferase of Rickettsia rickettsii (strain Iowa).